Consider the following 344-residue polypeptide: Nuclear distribution protein nudE-like 1-A (344 aa).

Residues 26-187 (YKKSYKEAQE…RQELAVRDTR (162 aa)) are a coiled coil. Basic and acidic residues predominate over residues 181 to 190 (LAVRDTRSEV). Disordered stretches follow at residues 181-209 (LAVR…TDSA) and 322-344 (PGDG…VLSV).

This sequence belongs to the nudE family. Phosphorylated in mitosis.

The protein resides in the cytoplasm. It localises to the cytoskeleton. It is found in the microtubule organizing center. Its subcellular location is the centrosome. The protein localises to the spindle. Required for organization of the cellular microtubule array and microtubule anchoring at the centrosome. Positively regulates the activity of the minus-end directed microtubule motor protein dynein. May enhance dynein-mediated microtubule sliding by targeting dynein to the microtubule plus end. This Danio rerio (Zebrafish) protein is Nuclear distribution protein nudE-like 1-A (ndel1a).